Reading from the N-terminus, the 158-residue chain is Protein Smg homolog (158 aa).

The protein belongs to the Smg family.

The chain is Protein Smg homolog from Pseudoalteromonas atlantica (strain T6c / ATCC BAA-1087).